The primary structure comprises 467 residues: MNDFERFGRNVVRTFYDPPPCNESNEPIWLLGQRYDSRPPLPKPAPSDSSTTATATAQAERNEDESWIRTSIDDKERKEAPNGEDPTQYGNWPSAFLDDFESRVWMTYRSGFSPIQKSQDPKATSAMSFRVRMQNLASPGFTSDAGFGCMIRSGQCILANALQILRLGRDWRWQENHADKDHAEILSLFADDPQAPFSIHRFVEHGAAVCGKYPGEWFGPSAAARCIQDLANKHREAGLKVYVSGDGADVYEDKLKQVAVDEDGLWQPTLILVGTRLGIDKITPVYWEALKASLQIPQSIGIAGGRPSASHYFVGVQGNNFYYLDPHSTRPLLPFHPPSLAAATSDTPNLTASTTSVSSTTSSTTIVPPADSIPAPSDPRQSLYPPSDLSTCHTRRIRRLQIREMDPSMLLAFLVTSEADYQDWKEGVQGVQGKSVVHVQDKEPPPRGQEREGAIDEVESWDEDGLQ.

Residues 32–93 are disordered; sequence GQRYDSRPPL…EDPTQYGNWP (62 aa). A compositionally biased stretch (basic and acidic residues) spans 60–81; sequence ERNEDESWIRTSIDDKERKEAP. Residue Cys149 is the Nucleophile of the active site. Catalysis depends on residues Asp325 and His327. Over residues 343–352 the composition is skewed to polar residues; the sequence is ATSDTPNLTA. 2 disordered regions span residues 343 to 390 and 429 to 467; these read ATSD…SDLS and QGVQ…DGLQ. A compositionally biased stretch (low complexity) spans 353–379; the sequence is STTSVSSTTSSTTIVPPADSIPAPSDP. Basic and acidic residues predominate over residues 439–454; sequence VQDKEPPPRGQEREGA. The segment covering 455 to 467 has biased composition (acidic residues); it reads IDEVESWDEDGLQ.

The protein belongs to the peptidase C54 family.

The protein resides in the cytoplasm. It localises to the nucleus. The protein localises to the preautophagosomal structure. It catalyses the reaction [protein]-C-terminal L-amino acid-glycyl-phosphatidylethanolamide + H2O = [protein]-C-terminal L-amino acid-glycine + a 1,2-diacyl-sn-glycero-3-phosphoethanolamine. Cysteine protease that plays a key role in cytoplasm to vacuole transport (Cvt) and autophagy by mediating both proteolytic activation and delipidation of ATG8. Required for selective autophagic degradation of the nucleus (nucleophagy) as well as for mitophagy which contributes to regulate mitochondrial quantity and quality by eliminating the mitochondria to a basal level to fulfill cellular energy requirements and preventing excess ROS production. The protease activity is required for proteolytic activation of ATG8: cleaves the C-terminal amino acid of ATG8 to reveal a C-terminal glycine. ATG8 ubiquitin-like activity requires the exposure of the glycine at the C-terminus for its conjugation to phosphatidylethanolamine (PE) and its insertion to membranes, which is necessary for autophagy. The ATG8-PE conjugate mediates tethering between adjacent membranes and stimulates membrane hemifusion, leading to expansion of the autophagosomal membrane during autophagy. In addition to the protease activity, also catalyzes deconjugation of PE-conjugated forms of ATG8 during macroautophagy: ATG8 delipidation is required to release the protein from membranes, which facilitates multiple events during macroautophagy, and especially for efficient autophagosome biogenesis, the assembly of ATG9-containing tubulovesicular clusters into phagophores/autophagosomes, and for the disassembly of PAS-associated ATG components. ATG8 delipidation by ATG4 also recycles ATG8-PE generated on inappropriate membranes to maintain a reservoir of unlipidated ATG8 that is required for autophagosome formation at the PAS. In Phaeosphaeria nodorum (strain SN15 / ATCC MYA-4574 / FGSC 10173) (Glume blotch fungus), this protein is Probable cysteine protease ATG4 (ATG4).